A 462-amino-acid polypeptide reads, in one-letter code: Nuclear distribution protein PAC1 (462 aa).

One can recognise a LisH domain in the interval 9-41 (QAEELHKAIIAYLGVINAPKTAAAFREEVNFSA). Residues 60 to 87 (TSVVRLQKKVLELEQRNQSLQSELDSTT) adopt a coiled-coil conformation. Polar residues predominate over residues 78–99 (SLQSELDSTTPTSLLRRNQDPS). The tract at residues 78 to 103 (SLQSELDSTTPTSLLRRNQDPSSWLP) is disordered. WD repeat units follow at residues 113-154 (SHRS…RTVK), 156-196 (HTKG…KNIR), 200-247 (GHDH…CVKT), 250-289 (GHADWVRDVSPSFDGRWLLSAGNDQTARLWDASSGEAKCT), 292-352 (GHEH…IKTL), 354-393 (GHDNWVRALIFHPGGKYLLSASDDKTIRCWDLTQEGRCVK), 398-445 (AHSH…AGIR), and 447-462 (VIATGCVDLNVRIFAS). Residues 414 to 434 (KDAPTNGDAPNGTTANGASKK) are disordered.

This sequence belongs to the WD repeat LIS1/nudF family. Self-associates. Interacts with NDL1 and dynein.

It localises to the cytoplasm. It is found in the cytoskeleton. Its subcellular location is the spindle pole. In terms of biological role, positively regulates the activity of the minus-end directed microtubule motor protein dynein. May enhance dynein-mediated microtubule sliding by targeting dynein to the microtubule plus end. Required for nuclear migration during vegetative growth as well as development. Required for retrograde early endosome (EE) transport from the hyphal tip. Required for localization of dynein to the mitotic spindle poles. Recruits additional proteins to the dynein complex at SPBs. The sequence is that of Nuclear distribution protein PAC1 from Phaeosphaeria nodorum (strain SN15 / ATCC MYA-4574 / FGSC 10173) (Glume blotch fungus).